The following is a 508-amino-acid chain: Ras association domain-containing protein 10 (508 aa).

Positions 1-133 constitute a Ras-associating domain; that stretch reads MDPSEKKISV…VRFVLVRSEA (133 aa). Disordered regions lie at residues 51 to 81 and 186 to 221; these read RRGL…AMPP and KLNR…ESAS. The span at 66–78 shows a compositional bias: acidic residues; sequence EPPDENDEDDDDA. Residues 195–214 are compositionally biased toward low complexity; the sequence is PSSPCSSTSSSTASSCSSSA. Coiled coils occupy residues 235–266 and 319–358; these read QDHT…DRMR and LEEL…NQRW. The segment at 473-508 is disordered; the sequence is GLAKSCPGNDEDSDTGLSSMHSQDSDSVPPVCESLV. The segment covering 487–498 has biased composition (polar residues); it reads TGLSSMHSQDSD.

As to expression, expressed in neural progenitor cells (at protein level).

The protein resides in the cytoplasm. It is found in the cytosol. Its subcellular location is the cytoskeleton. The protein localises to the microtubule organizing center. It localises to the centrosome. The protein resides in the spindle pole. Functionally, plays an important role in regulating embryonic neurogenesis. This is Ras association domain-containing protein 10 (Rassf10) from Mus musculus (Mouse).